The chain runs to 210 residues: UPF0301 protein CPS_1252 (210 aa).

It belongs to the UPF0301 (AlgH) family.

This Colwellia psychrerythraea (strain 34H / ATCC BAA-681) (Vibrio psychroerythus) protein is UPF0301 protein CPS_1252.